The following is a 177-amino-acid chain: Zinc metalloproteinase-disintegrin-like scutiarin (177 aa).

One can recognise a Disintegrin domain in the interval 1–63; that stretch reads NPCCDAATCK…ECPADVFHKN (63 aa). 10 cysteine pairs are disulfide-bonded: cysteine 3-cysteine 26, cysteine 17-cysteine 23, cysteine 22-cysteine 48, cysteine 35-cysteine 55, cysteine 42-cysteine 74, cysteine 67-cysteine 79, cysteine 86-cysteine 136, cysteine 101-cysteine 147, cysteine 114-cysteine 124, and cysteine 131-cysteine 173. The short motif at 41-43 is the D/ECD-tripeptide element; it reads ECD. Ca(2+) is bound by residues aspartate 43, proline 44, glutamate 46, aspartate 58, and valine 59.

The protein belongs to the venom metalloproteinase (M12B) family. P-III subfamily. P-IIIa sub-subfamily. As to quaternary structure, monomer. Requires Zn(2+) as cofactor. In terms of processing, glycosylated. In terms of tissue distribution, expressed by the venom gland.

The protein localises to the secreted. Functionally, snake venom metalloproteinase that impairs hemostasis in the envenomed animal. In Crotalus scutulatus scutulatus (Mojave rattlesnake), this protein is Zinc metalloproteinase-disintegrin-like scutiarin.